We begin with the raw amino-acid sequence, 335 residues long: 2-acylglycerol O-acyltransferase 1 (335 aa).

Transmembrane regions (helical) follow at residues 24-44 (WVFS…CLVL) and 47-67 (VWLL…TPQA). N-linked (GlcNAc...) asparagine glycosylation is found at asparagine 125 and asparagine 180.

The protein belongs to the diacylglycerol acyltransferase family.

The protein localises to the endoplasmic reticulum membrane. It catalyses the reaction a 2-acylglycerol + an acyl-CoA = a 1,2-diacylglycerol + CoA. The enzyme catalyses a 2-acylglycerol + an acyl-CoA = a 1,2-diacyl-sn-glycerol + CoA. The catalysed reaction is a 2-acylglycerol + an acyl-CoA = a 2,3-diacyl-sn-glycerol + CoA. It carries out the reaction a 1-acylglycerol + an acyl-CoA = a 1,2-diacylglycerol + CoA. It catalyses the reaction a 1-acylglycerol + an acyl-CoA = a 1,3-diacylglycerol + CoA. The enzyme catalyses a 1-acyl-sn-glycerol + an acyl-CoA = a 1,3-diacyl-sn-glycerol + CoA. The catalysed reaction is a 3-acyl-sn-glycerol + an acyl-CoA = a 1,3-diacyl-sn-glycerol + CoA. It participates in glycerolipid metabolism; triacylglycerol biosynthesis. Involved in glycerolipid synthesis and lipid metabolism. Catalyzes the formation of diacylglycerol, the precursor of triacylglycerol, by transferring the acyl chain of a fatty acyl-CoA to a monoacylglycerol, mainly at the sn-1 or sn-3 positions. It uses both sn-2-monoacylglycerol (2-acylglycerol) and sn-1-monoacylglycerol (1-acyl-sn-glycerol) equally well as substrates, and uses sn-3-monoacylglycerol (3-acyl-sn-glycerol) with lower efficiency. In Xenopus laevis (African clawed frog), this protein is 2-acylglycerol O-acyltransferase 1 (mogat1).